Reading from the N-terminus, the 502-residue chain is Maturase K (502 aa).

It belongs to the intron maturase 2 family. MatK subfamily.

Its subcellular location is the plastid. The protein resides in the chloroplast. Usually encoded in the trnK tRNA gene intron. Probably assists in splicing its own and other chloroplast group II introns. Binds its homologous trnK precursor transcript. The polypeptide is Maturase K (Sinapis alba (White mustard)).